Reading from the N-terminus, the 318-residue chain is MGEKLQKILARAGHGSRREIEAIIQQGRVSVDGKVSKLGDRVEVTQSTKIRLDGHLLSIKESEENVCRVLAYYKPEGELCTRNDPEGRPTVFDRLPKLRGSRWVAVGRLDVNTSGLLLFTTDGELANRLMHPSREVEREYAVRVFGQIDDDKIKQLSRGVQLEDGPAAFRTISYQGGEGINQWYNVTLTEGRNREVRRLWEAVGVQVSRLIRVRYGDINLPKGLPRGGWTELDLKATNYLRELVELDVETVSKLPVEKDRRRVKANQIRRAVKRHTEVSGRQVAGRQGSARKGSTRQNVGNAAPAATASRRSGPKKRG.

One can recognise an S4 RNA-binding domain in the interval 3 to 75 (EKLQKILARA…VCRVLAYYKP (73 aa)). Asp110 acts as the Nucleophile in catalysis. Residues 271-318 (AVKRHTEVSGRQVAGRQGSARKGSTRQNVGNAAPAATASRRSGPKKRG) are disordered.

The protein belongs to the pseudouridine synthase RsuA family.

It carries out the reaction uridine(2605) in 23S rRNA = pseudouridine(2605) in 23S rRNA. In terms of biological role, responsible for synthesis of pseudouridine from uracil-2605 in 23S ribosomal RNA. This is Ribosomal large subunit pseudouridine synthase B (rluB) from Yersinia pestis.